The sequence spans 225 residues: UPF0173 metal-dependent hydrolase Pisl_0803 (225 aa).

Belongs to the UPF0173 family.

In Pyrobaculum islandicum (strain DSM 4184 / JCM 9189 / GEO3), this protein is UPF0173 metal-dependent hydrolase Pisl_0803.